Consider the following 830-residue polypeptide: G-type lectin S-receptor-like serine/threonine-protein kinase SD1-13 (830 aa).

A signal peptide spans Met1–Ala21. Positions Thr22 to Glu145 constitute a Bulb-type lectin domain. Residues Thr22–Ser434 are Extracellular-facing. 3 N-linked (GlcNAc...) asparagine glycosylation sites follow: Asn40, Asn53, and Asn82. The 39-residue stretch at Pro283–Ala321 folds into the EGF-like; atypical domain. Cystine bridges form between Cys287-Cys299 and Cys293-Cys309. N-linked (GlcNAc...) asparagine glycosylation is found at Asn327, Asn384, and Asn432. The PAN domain occupies Cys340–Ala423. Intrachain disulfides connect Cys377/Cys398 and Cys381/Cys387. The chain crosses the membrane as a helical span at residues Ile435–Ala455. At Leu456–Arg830 the chain is on the cytoplasmic side. A Protein kinase domain is found at Phe512–Phe798. ATP is bound by residues Leu518–Val526 and Lys540. A Phosphothreonine modification is found at Thr545. Ser546 and Ser561 each carry phosphoserine. The segment at Val601–Ile618 is caM-binding. Asp637 (proton acceptor) is an active-site residue. Ser641, Ser654, and Ser670 each carry phosphoserine. The residue at position 671 (Thr671) is a Phosphothreonine. Residues Ser714, Ser715, Ser726, Ser805, Ser809, Ser810, Ser813, Ser818, and Ser823 each carry the phosphoserine modification. Residues Asn789–Arg830 are disordered. A compositionally biased stretch (polar residues) spans Glu806 to Arg830. Thr825 and Thr828 each carry phosphothreonine.

The protein belongs to the protein kinase superfamily. Ser/Thr protein kinase family. As to quaternary structure, interacts with PUB9, PUB13 and PUB14. Binds to calmodulin (CaM) in a Ca(2+)-dependent manner. Autophosphorylated. In terms of tissue distribution, mostly expressed in rosette leaves, and, to a lower extent, in cauline leaves and stems.

It localises to the cell membrane. It carries out the reaction L-seryl-[protein] + ATP = O-phospho-L-seryl-[protein] + ADP + H(+). The catalysed reaction is L-threonyl-[protein] + ATP = O-phospho-L-threonyl-[protein] + ADP + H(+). Its function is as follows. Receptor-like serine/threonine-protein kinase that represses the disease resistance signaling pathway triggered in response to bacterial pathogen such as Pseudomonas syringae pv. tomato. The sequence is that of G-type lectin S-receptor-like serine/threonine-protein kinase SD1-13 (SD113) from Arabidopsis thaliana (Mouse-ear cress).